The chain runs to 756 residues: Photosystem I P700 chlorophyll a apoprotein A1 (756 aa).

The next 8 membrane-spanning stretches (helical) occupy residues 73-96 (IFSAHFGHLAVIFVWLSGMYFHGA), 159-182 (LYVTAIGGLVMAGLMLFAGWFHYH), 198-222 (MNHHLAGLLGLGSLGWAGHQIHVSL), 298-316 (TAHHHLAIAVLFIIAGHMY), 353-376 (WHAQLAINLAMMGSLSIIVAHHMY), 392-418 (LSLFTHHMWIGGFLIVGGAAHGAIYMV), 440-462 (AIISHLNWVCIFLGFHSFGLYIH), and 537-555 (FLVHHIHAFTIHVTVLILL). Positions 579 and 588 each coordinate [4Fe-4S] cluster. The next 2 helical transmembrane spans lie at 595 to 616 (HVFLGLFWMYNSLSIVIFHFSW) and 670 to 692 (LSAYGLLFLGAHFVWAFSLMFLF). His681 contributes to the chlorophyll a' binding site. 2 residues coordinate chlorophyll a: Met689 and Tyr697. Trp698 contributes to the phylloquinone binding site. A helical transmembrane segment spans residues 730–750 (AVGVAHYLLGGIATTWAFFLA).

This sequence belongs to the PsaA/PsaB family. As to quaternary structure, the PsaA/B heterodimer binds the P700 chlorophyll special pair and subsequent electron acceptors. PSI consists of a core antenna complex that captures photons, and an electron transfer chain that converts photonic excitation into a charge separation. The cyanobacterial PSI reaction center is composed of one copy each of PsaA,B,C,D,E,F,I,J,K,L,M and X, and forms trimeric complexes. PSI electron transfer chain: 5 chlorophyll a, 1 chlorophyll a', 2 phylloquinones and 3 4Fe-4S clusters. PSI core antenna: 90 chlorophyll a, 22 carotenoids, 3 phospholipids and 1 galactolipid. P700 is a chlorophyll a/chlorophyll a' dimer, A0 is one or more chlorophyll a, A1 is one or both phylloquinones and FX is a shared 4Fe-4S iron-sulfur center. is required as a cofactor.

Its subcellular location is the cellular thylakoid membrane. The enzyme catalyses reduced [plastocyanin] + hnu + oxidized [2Fe-2S]-[ferredoxin] = oxidized [plastocyanin] + reduced [2Fe-2S]-[ferredoxin]. PsaA and PsaB bind P700, the primary electron donor of photosystem I (PSI), as well as the electron acceptors A0, A1 and FX. PSI is a plastocyanin/cytochrome c6-ferredoxin oxidoreductase, converting photonic excitation into a charge separation, which transfers an electron from the donor P700 chlorophyll pair to the spectroscopically characterized acceptors A0, A1, FX, FA and FB in turn. Oxidized P700 is reduced on the lumenal side of the thylakoid membrane by plastocyanin or cytochrome c6. In Cyanothece sp. (strain PCC 7425 / ATCC 29141), this protein is Photosystem I P700 chlorophyll a apoprotein A1.